A 334-amino-acid polypeptide reads, in one-letter code: Aspartate carbamoyltransferase catalytic subunit (334 aa).

Carbamoyl phosphate is bound by residues Arg-71 and Thr-72. Lys-99 serves as a coordination point for L-aspartate. Carbamoyl phosphate-binding residues include Arg-121, His-151, and Gln-154. Residues Arg-184 and Arg-239 each contribute to the L-aspartate site. Carbamoyl phosphate-binding residues include Gly-280 and Pro-281.

This sequence belongs to the aspartate/ornithine carbamoyltransferase superfamily. ATCase family. Heterododecamer (2C3:3R2) of six catalytic PyrB chains organized as two trimers (C3), and six regulatory PyrI chains organized as three dimers (R2).

The catalysed reaction is carbamoyl phosphate + L-aspartate = N-carbamoyl-L-aspartate + phosphate + H(+). It participates in pyrimidine metabolism; UMP biosynthesis via de novo pathway; (S)-dihydroorotate from bicarbonate: step 2/3. In terms of biological role, catalyzes the condensation of carbamoyl phosphate and aspartate to form carbamoyl aspartate and inorganic phosphate, the committed step in the de novo pyrimidine nucleotide biosynthesis pathway. The protein is Aspartate carbamoyltransferase catalytic subunit of Pseudomonas fluorescens (strain ATCC BAA-477 / NRRL B-23932 / Pf-5).